The chain runs to 58 residues: ComX pheromone (58 aa).

Positions 1–52 are excised as a propeptide; sequence MKQDMIDYLMKNPQVLTKLENGEASLIGIPDKLIPSIVDIFNKKMTLSKKCK. The 3'-geranyl-2',N2-cyclotryptophan; in strain RO-E-2 /NRRL B-23055 moiety is linked to residue Trp56.

As to quaternary structure, interacts directly with the sensor histidine kinase ComP and stimulates its activity. Post-translationally, trp-56 is modified by geranylation, which is essential for activity. Modified by the tryptophan prenyltransferase ComQ before export to the extracellular environment. The type of isoprenyl derivative differs among the different pherotypes and depends on ComX primary sequence.

The protein resides in the secreted. Part of a major quorum-sensing system that regulates the development of genetic competence. Acts through the activation of the two-component regulatory system ComP/ComA composed of a sensor histidine kinase, ComP, and a response regulator, ComA. This is ComX pheromone from Bacillus spizizenii (Bacillus subtilis subsp. spizizenii).